The following is a 368-amino-acid chain: Single-stranded DNA-binding protein 3 (368 aa).

A LisH domain is found at 16 to 48 (AREKLALYVYEYLLHVGAQKSAQTFLSEIRWEK). The segment at 100–368 (PVLGNIPPND…NYSPSMTMSV (269 aa)) is disordered. Residues 126–139 (GSQPSPHAQPPPHN) show a composition bias toward pro residues. Composition is skewed to low complexity over residues 174–189 (PNMG…PRGM), 211–220 (GPGMPGINMG), and 230–248 (PSSA…TYVG). Over residues 252–262 (GGGPPGTPIMP) the composition is skewed to pro residues. The span at 265-276 (ADSTNSSDNIYT) shows a compositional bias: polar residues. The span at 295–305 (GSDGPMGGMGG) shows a compositional bias: gly residues. Residues 326–337 (NSPNNISGISNP) show a composition bias toward low complexity. A compositionally biased stretch (polar residues) spans 353–368 (HSFQNDNYSPSMTMSV).

In terms of tissue distribution, expressed in embryonic fibroblasts and chondrocytes.

It localises to the nucleus. Functionally, may be involved in transcription regulation of the alpha 2(I) collagen gene where it binds to the single-stranded polypyrimidine sequences in the promoter region. This chain is Single-stranded DNA-binding protein 3 (SSBP3), found in Gallus gallus (Chicken).